Consider the following 745-residue polypeptide: 1,4-alpha-glucan branching enzyme GlgB (745 aa).

Residue Asp416 is the Nucleophile of the active site. Catalysis depends on Glu469, which acts as the Proton donor.

This sequence belongs to the glycosyl hydrolase 13 family. GlgB subfamily. In terms of assembly, monomer.

The enzyme catalyses Transfers a segment of a (1-&gt;4)-alpha-D-glucan chain to a primary hydroxy group in a similar glucan chain.. It participates in glycan biosynthesis; glycogen biosynthesis. Functionally, catalyzes the formation of the alpha-1,6-glucosidic linkages in glycogen by scission of a 1,4-alpha-linked oligosaccharide from growing alpha-1,4-glucan chains and the subsequent attachment of the oligosaccharide to the alpha-1,6 position. This Shewanella sp. (strain MR-4) protein is 1,4-alpha-glucan branching enzyme GlgB.